A 475-amino-acid polypeptide reads, in one-letter code: MSKVVLASQLPNKRNASLAPGLKQRHVTMLSIAGVIGAGLFVGSGHAIAAAGPAALLAYLIAGTLVVLVMRMLGEMAVASPDTGSFSTYADRSIGRWAGFTIGWLYWWFWVLVIPLEAIAAAAILNAWFPAIDTWIFALAVTFLLTVTNLFSVARYGEFEFWFALLKVIAIIAFIVLGAVAIVGGLPEREVSGLSSLMASHGGFVPNGYGAVLGALLTTMFSFMGTEIVTIAAAESKDPAKQITRATNSVIWRIGLFYLVSIFIVISIVPWNDPLLIQVGSYQRALELLDIPHAKLIVDLVVLVAVASCLNSAIYTSSRMVFSLAKRGDAPSVLKLTNTAHVPRPAVLASTAVGFLTTIVNYFAPEKVFTFLLASSGAVALLVYLVIAVAQLRMRKQLQASGQPIEFRMWLYPWLTWAVILFIVAALSIMLIMPEHRHEVFATALLTIFTVCLGLLNARRKPRLGEDYAGKTARV.

The next 12 membrane-spanning stretches (helical) occupy residues 27-47 (VTMLSIAGVIGAGLFVGSGHA), 48-68 (IAAAGPAALLAYLIAGTLVVL), 105-125 (LYWWFWVLVIPLEAIAAAAIL), 127-147 (AWFPAIDTWIFALAVTFLLTV), 163-183 (FALLKVIAIIAFIVLGAVAIV), 211-231 (AVLGALLTTMFSFMGTEIVTI), 250-270 (VIWRIGLFYLVSIFIVISIVP), 296-316 (LIVDLVVLVAVASCLNSAIYT), 345-365 (PAVLASTAVGFLTTIVNYFAP), 368-388 (VFTFLLASSGAVALLVYLVIA), 413-433 (PWLTWAVILFIVAALSIMLIM), and 438-458 (HEVFATALLTIFTVCLGLLNA).

The protein belongs to the amino acid-polyamine-organocation (APC) superfamily. Amino acid transporter (AAT) (TC 2.A.3.1) family.

It is found in the membrane. In terms of biological role, involved in the degradation of beta-alanine. The chain is Probable GABA permease (bauD) from Pseudomonas aeruginosa (strain ATCC 15692 / DSM 22644 / CIP 104116 / JCM 14847 / LMG 12228 / 1C / PRS 101 / PAO1).